A 309-amino-acid polypeptide reads, in one-letter code: Anamorsin (309 aa).

Residues 6–172 form an N-terminal SAM-like domain region; it reads ISPGQLVAVF…KPNFEVGSSS (167 aa). A linker region spans residues 173 to 222; it reads QLKLLHKKSSSVKPVVDPATAKLWTLSANDMEDDSMDLIDSDELLDPEDL. A phosphoserine mark is found at Ser182, Ser183, and Ser213. Cys235, Cys244, Cys247, and Cys249 together coordinate [2Fe-2S] cluster. A fe-S binding site A region spans residues 235–249; sequence CGEGKKRKACKNCTC. Ser269 bears the Phosphoserine mark. Positions 271, 274, 282, and 285 each coordinate [4Fe-4S] cluster. Short sequence motifs (cx2C motif) lie at residues 271 to 274 and 282 to 285; these read CGNC and CANC. Residues 271-285 are fe-S binding site B; it reads CGNCYLGDAFRCANC. 2 positions are modified to phosphoserine: Ser302 and Ser304.

Belongs to the anamorsin family. As to quaternary structure, monomer. Interacts with NDOR1. Interacts with CHCHD4. [2Fe-2S] cluster serves as cofactor. It depends on [4Fe-4S] cluster as a cofactor.

Its subcellular location is the cytoplasm. It is found in the nucleus. The protein localises to the mitochondrion intermembrane space. In terms of biological role, component of the cytosolic iron-sulfur (Fe-S) protein assembly (CIA) machinery required for the maturation of extramitochondrial Fe-S proteins. Part of an electron transfer chain functioning in an early step of cytosolic Fe-S biogenesis, facilitating the de novo assembly of a [4Fe-4S] cluster on the scaffold complex NUBP1-NUBP2. Electrons are transferred to CIAPIN1 from NADPH via the FAD- and FMN-containing protein NDOR1. NDOR1-CIAPIN1 are also required for the assembly of the diferric tyrosyl radical cofactor of ribonucleotide reductase (RNR), probably by providing electrons for reduction during radical cofactor maturation in the catalytic small subunit. Has anti-apoptotic effects in the cell. Involved in negative control of cell death upon cytokine withdrawal. Promotes development of hematopoietic cells. The polypeptide is Anamorsin (Rattus norvegicus (Rat)).